Consider the following 365-residue polypeptide: 3-isopropylmalate dehydrogenase (365 aa).

An NAD(+)-binding site is contributed by 78-91; the sequence is GKKWNNLPIEKRPE. Arg-99, Arg-109, Arg-139, and Asp-228 together coordinate substrate. Mg(2+) is bound by residues Asp-228, Asp-252, and Asp-256. 286–298 serves as a coordination point for NAD(+); it reads GSAPDIAGKNIAN.

It belongs to the isocitrate and isopropylmalate dehydrogenases family. LeuB type 1 subfamily. Homodimer. It depends on Mg(2+) as a cofactor. Requires Mn(2+) as cofactor.

The protein localises to the cytoplasm. It carries out the reaction (2R,3S)-3-isopropylmalate + NAD(+) = 4-methyl-2-oxopentanoate + CO2 + NADH. The protein operates within amino-acid biosynthesis; L-leucine biosynthesis; L-leucine from 3-methyl-2-oxobutanoate: step 3/4. In terms of biological role, catalyzes the oxidation of 3-carboxy-2-hydroxy-4-methylpentanoate (3-isopropylmalate) to 3-carboxy-4-methyl-2-oxopentanoate. The product decarboxylates to 4-methyl-2 oxopentanoate. This Buchnera aphidicola subsp. Macrosiphoniella ludovicianae protein is 3-isopropylmalate dehydrogenase.